Here is a 228-residue protein sequence, read N- to C-terminus: MAEDKTKPSELDQGKYDADDNVKIICLGDSAVGKSKLMERFLMDGFQPQQLSTYALTLYKHTATVDGKTILVDFWDTAGQERFQSMHASYYHKAHACIMVFDIQRKVTYRNLSTWYTELREFRPEIPCIVVANKIDDINVTQKSFNFAKKFSLPLYFVSAADGTNVVKLFNDAIRLAVSYKQNSQDFMDEIFQELENFSLEQEEEDVPDQEQSSSIETPSEEVASPHS.

GTP is bound by residues 28–35 (GDSAVGKS), 76–80 (DTAGQ), and 133–136 (NKID). Residues 200 to 228 (LEQEEEDVPDQEQSSSIETPSEEVASPHS) are disordered.

The protein belongs to the small GTPase superfamily. Rab family. In terms of assembly, interacts with IFT27, IFT81, IFT172, ATP6V1E1, HK1, LDHC, MAPRE1 and HSPA2. As to expression, expressed in the testis.

Plays an essential role in male fertility, sperm intra-flagellar transport, and tail assembly. Binds, in a GTP-regulated manner, to a specific set of effector proteins including key proteins involved in cilia development and function and delivers them into the growing sperm tail. In Homo sapiens (Human), this protein is Rab-like protein 2A (RABL2A).